Here is a 1062-residue protein sequence, read N- to C-terminus: SLIT-ROBO Rho GTPase-activating protein 1 (1062 aa).

The F-BAR domain occupies 19 to 314; it reads SQVKEIRAQL…AVDNLEPRSD (296 aa). Positions 352-382 form a coiled coil; sequence QAELMLRNQQLQSRLATLKIESEEVKKTTEA. S416 bears the Phosphoserine mark. In terms of domain architecture, Rho-GAP spans 481–671; it reads GRRNSHARHQ…TIIIHHETIF (191 aa). Residues 720 to 779 form the SH3 domain; that stretch reads CEPIEAIAKFDYVGRSARELSFKKGASLLLYHRASEDWWEGRHNGIDGLVPHQYIVVQDM. Polar residues predominate over residues 785–799; it reads DTLSQKADSEASSGP. A disordered region spans residues 785-931; sequence DTLSQKADSE…TGFNDHKPLD (147 aa). 2 positions are modified to phosphoserine: S812 and S894. The segment covering 899-908 has biased composition (basic and acidic residues); sequence SRHDSLKKID. Position 909 is a phosphoserine (S909). Positions 914–923 are enriched in polar residues; sequence RSTSSGQYTG. Residues 933 to 960 are a coiled coil; sequence ETIAQDIEETMNTALNELRELERQSTVK. A compositionally biased stretch (polar residues) spans 974–988; that stretch reads KNSPTPATSTESLSP. 2 disordered regions span residues 974-1013 and 1028-1062; these read KNSP…ETMS and KPPA…SCTM. S976 carries the post-translational modification Phosphoserine. T978 carries the post-translational modification Phosphothreonine. Residues 1004 to 1013 are compositionally biased toward low complexity; it reads STSSSSETMS. Position 1009 is a phosphoserine (S1009). Polar residues predominate over residues 1053-1062; the sequence is QGPTDKSCTM.

In terms of assembly, homodimer. Forms a heterooligomer with SRGAP2 and SRGAP3 through its F-BAR domain. Interacts with CDC42 and RHOA. Interacts with FASLG. Interacts (via SH3 domain) with ROBO1.

Its function is as follows. GTPase-activating protein for RhoA and Cdc42 small GTPases. Together with CDC42 seems to be involved in the pathway mediating the repulsive signaling of Robo and Slit proteins in neuronal migration. SLIT2, probably through interaction with ROBO1, increases the interaction of SRGAP1 with ROBO1 and inactivates CDC42. This is SLIT-ROBO Rho GTPase-activating protein 1 (Srgap1) from Mus musculus (Mouse).